Here is a 621-residue protein sequence, read N- to C-terminus: 1-deoxy-D-xylulose-5-phosphate synthase (621 aa).

Thiamine diphosphate is bound by residues His80 and 121–123 (GHS). Asp152 is a binding site for Mg(2+). Thiamine diphosphate is bound by residues 153–154 (GA), Asn181, Tyr288, and Glu370. Asn181 serves as a coordination point for Mg(2+).

Belongs to the transketolase family. DXPS subfamily. Homodimer. The cofactor is Mg(2+). Thiamine diphosphate is required as a cofactor.

It catalyses the reaction D-glyceraldehyde 3-phosphate + pyruvate + H(+) = 1-deoxy-D-xylulose 5-phosphate + CO2. It functions in the pathway metabolic intermediate biosynthesis; 1-deoxy-D-xylulose 5-phosphate biosynthesis; 1-deoxy-D-xylulose 5-phosphate from D-glyceraldehyde 3-phosphate and pyruvate: step 1/1. Functionally, catalyzes the acyloin condensation reaction between C atoms 2 and 3 of pyruvate and glyceraldehyde 3-phosphate to yield 1-deoxy-D-xylulose-5-phosphate (DXP). This Shewanella woodyi (strain ATCC 51908 / MS32) protein is 1-deoxy-D-xylulose-5-phosphate synthase.